The following is a 377-amino-acid chain: RIB43A-like with coiled-coils protein 2 (377 aa).

Positions 188-238 form a coiled coil; the sequence is ELKFDEAARDLQRLEITTRKAVCAAVKEFNKKQVVELAERKRQVKQQEQED. The tract at residues 355–377 is disordered; sequence QLDAAPSSQPTEDYFSQFNTRSR. Residues 360 to 377 are compositionally biased toward polar residues; sequence PSSQPTEDYFSQFNTRSR.

Belongs to the RIB43A family. Microtubule inner protein component of sperm flagellar doublet microtubules.

Its subcellular location is the cytoplasm. The protein resides in the cytoskeleton. It is found in the cilium axoneme. It localises to the flagellum axoneme. In terms of biological role, microtubule inner protein (MIP) part of the dynein-decorated doublet microtubules (DMTs) in cilia axoneme, which is required for motile cilia beating. The sequence is that of RIB43A-like with coiled-coils protein 2 from Rattus norvegicus (Rat).